The following is a 508-amino-acid chain: MAGAFDFDLEKNPPVVQSTADNSSDGAVPGETFTYGDSTYAKIQRLAAELNIEQRGIERVPAAEQTDTSVFNIGSMWLAANMVVSSFAIGVLGKSVYSLGFVDAILTVLFFNLLGIMTVCFFSCFGPFGLRQMVFSRLWFGWYVTKGFAVLNILACLGWSAANAIVGAQMLHAVNSDVPGFAAILIISICTLLVTFAGYKVVHLYEYWSWIPTFIVFMIILGTFAHSGDFQNIPMGVGTSEMGSVLSFGSAVYGFATGWTSYAADYTVYQPANRSKRKIFLSTWLGLIVPLLFVEMLGVAVMTATDIKGSKYDVGYATSGNGGLIAAVLQPLGGFGDFCLVILALSIVANNCPNFYSVALTVQVLSRYAQRVPRFIWTLFGTGVSIAIAIPGYSHFETVLENFMNFIAYWLAIYSAIAIMDHFVFKRGFSGYVVENFDKREKLPVGIAATIAFGFGVAGMITGMSQPWYVGPIARHAAGGDVGFELGFAFAAFSYLCLRPFEIKFFGR.

Over 1 to 72 the chain is Cytoplasmic; the sequence is MAGAFDFDLE…AEQTDTSVFN (72 aa). A helical membrane pass occupies residues 73–93; it reads IGSMWLAANMVVSSFAIGVLG. At 94 to 104 the chain is on the extracellular side; sequence KSVYSLGFVDA. Residues 105 to 125 form a helical membrane-spanning segment; it reads ILTVLFFNLLGIMTVCFFSCF. Residues 126–147 lie on the Cytoplasmic side of the membrane; that stretch reads GPFGLRQMVFSRLWFGWYVTKG. Residues 148-168 form a helical membrane-spanning segment; that stretch reads FAVLNILACLGWSAANAIVGA. The Extracellular segment spans residues 169 to 177; the sequence is QMLHAVNSD. The chain crosses the membrane as a helical span at residues 178–198; sequence VPGFAAILIISICTLLVTFAG. Residues 199–200 lie on the Cytoplasmic side of the membrane; that stretch reads YK. A helical transmembrane segment spans residues 201–221; it reads VVHLYEYWSWIPTFIVFMIIL. Over 222–243 the chain is Extracellular; sequence GTFAHSGDFQNIPMGVGTSEMG. Residues 244–264 form a helical membrane-spanning segment; that stretch reads SVLSFGSAVYGFATGWTSYAA. Topologically, residues 265-278 are cytoplasmic; that stretch reads DYTVYQPANRSKRK. Residues 279–299 form a helical membrane-spanning segment; sequence IFLSTWLGLIVPLLFVEMLGV. Residues 300–323 lie on the Extracellular side of the membrane; that stretch reads AVMTATDIKGSKYDVGYATSGNGG. A helical transmembrane segment spans residues 324 to 344; sequence LIAAVLQPLGGFGDFCLVILA. Over 345–374 the chain is Cytoplasmic; the sequence is LSIVANNCPNFYSVALTVQVLSRYAQRVPR. A helical transmembrane segment spans residues 375-395; the sequence is FIWTLFGTGVSIAIAIPGYSH. The Extracellular portion of the chain corresponds to 396–404; that stretch reads FETVLENFM. A helical membrane pass occupies residues 405-425; that stretch reads NFIAYWLAIYSAIAIMDHFVF. Topologically, residues 426–442 are cytoplasmic; the sequence is KRGFSGYVVENFDKREK. A helical transmembrane segment spans residues 443–463; that stretch reads LPVGIAATIAFGFGVAGMITG. Residues 464-477 are Extracellular-facing; it reads MSQPWYVGPIARHA. A helical membrane pass occupies residues 478–498; sequence AGGDVGFELGFAFAAFSYLCL. Residues 499–508 lie on the Cytoplasmic side of the membrane; it reads RPFEIKFFGR.

Belongs to the purine-cytosine permease (2.A.39) family.

Its subcellular location is the cell membrane. Its function is as follows. This permease has a broad specificity towards purines, and also transports cytosine, but neither uracil nor thymine. Contributes very little in purine uptake. Its major role may be the uptake of cytosine. The protein is Purine-cytosine permease fcyB (fcyB) of Emericella nidulans (strain FGSC A4 / ATCC 38163 / CBS 112.46 / NRRL 194 / M139) (Aspergillus nidulans).